A 94-amino-acid polypeptide reads, in one-letter code: Co-chaperonin GroES (94 aa).

The protein belongs to the GroES chaperonin family. In terms of assembly, heptamer of 7 subunits arranged in a ring. Interacts with the chaperonin GroEL.

It localises to the cytoplasm. Together with the chaperonin GroEL, plays an essential role in assisting protein folding. The GroEL-GroES system forms a nano-cage that allows encapsulation of the non-native substrate proteins and provides a physical environment optimized to promote and accelerate protein folding. GroES binds to the apical surface of the GroEL ring, thereby capping the opening of the GroEL channel. This Clostridium perfringens (strain SM101 / Type A) protein is Co-chaperonin GroES.